A 372-amino-acid chain; its full sequence is Alanine dehydrogenase 2 (372 aa).

His95 is a catalytic residue. Position 169–199 (169–199 (KVTIIGGGQAGTNAAKIALGLGADVTILDVN)) interacts with NAD(+).

This sequence belongs to the AlaDH/PNT family.

The catalysed reaction is L-alanine + NAD(+) + H2O = pyruvate + NH4(+) + NADH + H(+). It functions in the pathway amino-acid degradation; L-alanine degradation via dehydrogenase pathway; NH(3) and pyruvate from L-alanine: step 1/1. In terms of biological role, may play a role in cell wall synthesis as L-alanine is an important constituent of the peptidoglycan layer. This Staphylococcus aureus (strain N315) protein is Alanine dehydrogenase 2 (ald2).